Here is a 43-residue protein sequence, read N- to C-terminus: ALNCASGWSGGYDQHCYKVFDIPPSWAADEKFCKQQTSGGHLV.

The C-type lectin domain maps to Ala-1–Val-43. Cysteines 4 and 16 form a disulfide.

As to quaternary structure, heterodimer of subunits alpha and beta; disulfide-linked. Ca(2+) is required as a cofactor. Glycosylated. Expressed by the venom gland.

Its subcellular location is the secreted. Binds to the platelet GPIb/IX/V receptor system and inhibits ristocetin-induced platelet aggregation in human platelet-rich plasma. Strongly inhibits platelet aggregation induced by ADP, calcium ionophore, thrombin and collagen. Does not inhibit U46619-induced platelet aggregation. The protein is Snaclec lebecetin subunit beta of Macrovipera lebetinus (Levantine viper).